A 148-amino-acid chain; its full sequence is NADPH-dependent 7-cyano-7-deazaguanine reductase (148 aa).

The Thioimide intermediate role is filled by Cys-50. Asp-57 acts as the Proton donor in catalysis. Residues 72–74 (VES) and 91–92 (HE) contribute to the substrate site.

It belongs to the GTP cyclohydrolase I family. QueF type 1 subfamily.

The protein localises to the cytoplasm. It catalyses the reaction 7-aminomethyl-7-carbaguanine + 2 NADP(+) = 7-cyano-7-deazaguanine + 2 NADPH + 3 H(+). It functions in the pathway tRNA modification; tRNA-queuosine biosynthesis. Functionally, catalyzes the NADPH-dependent reduction of 7-cyano-7-deazaguanine (preQ0) to 7-aminomethyl-7-deazaguanine (preQ1). This Helicobacter pylori (strain J99 / ATCC 700824) (Campylobacter pylori J99) protein is NADPH-dependent 7-cyano-7-deazaguanine reductase.